Here is a 266-residue protein sequence, read N- to C-terminus: Potassium/proton antiporter CemA (266 aa).

A run of 3 helical transmembrane segments spans residues 46–66, 151–171, and 226–246; these read VIVS…INIL, FLSF…IIIL, and FMSL…KYWI.

The protein belongs to the CemA family.

The protein localises to the plastid. Its subcellular location is the chloroplast inner membrane. It carries out the reaction K(+)(in) + H(+)(out) = K(+)(out) + H(+)(in). Contributes to K(+)/H(+) antiport activity by supporting proton efflux to control proton extrusion and homeostasis in chloroplasts in a light-dependent manner to modulate photosynthesis. Prevents excessive induction of non-photochemical quenching (NPQ) under continuous-light conditions. Indirectly promotes efficient inorganic carbon uptake into chloroplasts. This is Potassium/proton antiporter CemA from Chlorella vulgaris (Green alga).